Consider the following 227-residue polypeptide: MRVAGAAKLVVAVAVFLLTFYVISQVFEIKMDASLGNLFARSALDTAARSTKPPRYKCGISKACPEKHFAFKMASGAANVVGPKICLEDNVLMSGVKNNVGRGINVALANGKTGEVLDTKYFDMWGGDVAPFIEFLKAIQDGTIVLMGTYDDGATKLNDEARRLIADLGSTSITNLGFRDNWVFCGGKGIKTKSPFEQHIKNNKDTNKYEGWPEVVEMEGCIPQKQD.

The first 24 residues, Met-1–Ser-24, serve as a signal peptide directing secretion. 2 disulfides stabilise this stretch: Cys-58/Cys-86 and Cys-64/Cys-221. The 159-residue stretch at Lys-67–Lys-225 folds into the GG-type lectin domain.

Belongs to the FAM3 family. As to expression, present in most secretory epithelia (at protein level).

The protein localises to the secreted. The protein resides in the cytoplasmic vesicle. Functionally, may be involved in retinal laminar formation. Promotes epithelial to mesenchymal transition. The sequence is that of Protein FAM3C (FAM3C) from Homo sapiens (Human).